The following is a 578-amino-acid chain: A-type ATP synthase subunit A (578 aa).

Position 228 to 235 (228 to 235) interacts with ATP; it reads GPFGSGKT.

Belongs to the ATPase alpha/beta chains family. Has multiple subunits with at least A(3), B(3), C, D, E, F, H, I and proteolipid K(x).

It is found in the cell membrane. It catalyses the reaction ATP + H2O + 4 H(+)(in) = ADP + phosphate + 5 H(+)(out). In terms of biological role, component of the A-type ATP synthase that produces ATP from ADP in the presence of a proton gradient across the membrane. The A chain is the catalytic subunit. This is A-type ATP synthase subunit A from Methanosarcina acetivorans (strain ATCC 35395 / DSM 2834 / JCM 12185 / C2A).